Consider the following 628-residue polypeptide: UvrABC system protein C (628 aa).

Residues 21-100 enclose the GIY-YIG domain; sequence TGPGIYQFKN…IKELKPRYNV (80 aa). In terms of domain architecture, UVR spans 214-249; sequence AGLLKELHEKMLTAAAELRFEEAAELKMQLQSLRRY.

Belongs to the UvrC family. In terms of assembly, interacts with UvrB in an incision complex.

It localises to the cytoplasm. Functionally, the UvrABC repair system catalyzes the recognition and processing of DNA lesions. UvrC both incises the 5' and 3' sides of the lesion. The N-terminal half is responsible for the 3' incision and the C-terminal half is responsible for the 5' incision. The chain is UvrABC system protein C from Chlorobium luteolum (strain DSM 273 / BCRC 81028 / 2530) (Pelodictyon luteolum).